The chain runs to 159 residues: Phosphopantetheine adenylyltransferase (159 aa).

A substrate-binding site is contributed by S9. ATP is bound by residues 9–10 (SF) and H17. Residues K41, L73, and R87 each coordinate substrate. Residues 88–90 (GLR), E98, and 123–129 (YSYVSSS) contribute to the ATP site.

It belongs to the bacterial CoaD family. In terms of assembly, homohexamer. Mg(2+) is required as a cofactor.

The protein resides in the cytoplasm. It catalyses the reaction (R)-4'-phosphopantetheine + ATP + H(+) = 3'-dephospho-CoA + diphosphate. It participates in cofactor biosynthesis; coenzyme A biosynthesis; CoA from (R)-pantothenate: step 4/5. Its function is as follows. Reversibly transfers an adenylyl group from ATP to 4'-phosphopantetheine, yielding dephospho-CoA (dPCoA) and pyrophosphate. The sequence is that of Phosphopantetheine adenylyltransferase from Shouchella clausii (strain KSM-K16) (Alkalihalobacillus clausii).